A 1029-amino-acid chain; its full sequence is Beta-galactosidase 2 (1029 aa).

Positions 104 and 203 each coordinate substrate. Residue D203 participates in Na(+) binding. Residues E418, H420, and E463 each contribute to the Mg(2+) site. Substrate is bound by residues E463 and 539-542 (EYAH). E463 serves as the catalytic Proton donor. E539 acts as the Nucleophile in catalysis. N599 provides a ligand contact to Mg(2+). 2 residues coordinate Na(+): F603 and N606. Residues N606 and W1004 each coordinate substrate.

The protein belongs to the glycosyl hydrolase 2 family. In terms of assembly, homotetramer. The cofactor is Mg(2+). Na(+) is required as a cofactor.

The catalysed reaction is Hydrolysis of terminal non-reducing beta-D-galactose residues in beta-D-galactosides.. The polypeptide is Beta-galactosidase 2 (Enterobacter cloacae).